A 299-amino-acid chain; its full sequence is Tyrosine recombinase XerC (299 aa).

The Core-binding (CB) domain occupies 1–85 (MQNELDAYFE…SVRGLYRYLN (85 aa)). Positions 106 to 285 (RLPRLLDTDR…DFQHLAKVYD (180 aa)) constitute a Tyr recombinase domain. Residues Arg-146, Lys-170, His-237, Arg-240, and His-263 contribute to the active site. The O-(3'-phospho-DNA)-tyrosine intermediate role is filled by Tyr-272.

It belongs to the 'phage' integrase family. XerC subfamily. Forms a cyclic heterotetrameric complex composed of two molecules of XerC and two molecules of XerD.

The protein resides in the cytoplasm. Functionally, site-specific tyrosine recombinase, which acts by catalyzing the cutting and rejoining of the recombining DNA molecules. The XerC-XerD complex is essential to convert dimers of the bacterial chromosome into monomers to permit their segregation at cell division. It also contributes to the segregational stability of plasmids. In Stutzerimonas stutzeri (strain A1501) (Pseudomonas stutzeri), this protein is Tyrosine recombinase XerC.